A 479-amino-acid polypeptide reads, in one-letter code: Glutamate--tRNA ligase 2 (479 aa).

The short motif at 10 to 20 (PSPTGSLHIGG) is the 'HIGH' region element. The 'KMSKS' region signature appears at 243-247 (KLSKR). Lys-246 is an ATP binding site.

Belongs to the class-I aminoacyl-tRNA synthetase family. Glutamate--tRNA ligase type 1 subfamily. As to quaternary structure, monomer.

It is found in the cytoplasm. The catalysed reaction is tRNA(Glu) + L-glutamate + ATP = L-glutamyl-tRNA(Glu) + AMP + diphosphate. Its function is as follows. Catalyzes the attachment of glutamate to tRNA(Glu) in a two-step reaction: glutamate is first activated by ATP to form Glu-AMP and then transferred to the acceptor end of tRNA(Glu). This Thermoanaerobacter pseudethanolicus (strain ATCC 33223 / 39E) (Clostridium thermohydrosulfuricum) protein is Glutamate--tRNA ligase 2.